We begin with the raw amino-acid sequence, 181 residues long: Oligoribonuclease (181 aa).

One can recognise an Exonuclease domain in the interval 8–171; the sequence is LIWIDLEMTG…QDIQESIAEL (164 aa). Tyr-129 is an active-site residue.

It belongs to the oligoribonuclease family.

It is found in the cytoplasm. Its function is as follows. 3'-to-5' exoribonuclease specific for small oligoribonucleotides. This is Oligoribonuclease from Shewanella sp. (strain MR-4).